The chain runs to 1049 residues: Multidrug efflux pump subunit AcrB (1049 aa).

Residues 1–9 lie on the Cytoplasmic side of the membrane; the sequence is MPNFFIDRP. A helical transmembrane segment spans residues 10-28; that stretch reads IFAWVIAIIIMLAGGLAIL. At 29 to 336 the chain is on the periplasmic side; it reads KLPVAQYPTI…YDTTPFVKIS (308 aa). Residues 337–356 form a helical membrane-spanning segment; sequence IHEVVKTLVEAIILVFLVMY. Over 357–365 the chain is Cytoplasmic; that stretch reads LFLQNFRAT. The helical transmembrane segment at 366–385 threads the bilayer; sequence LIPTIAVPVVLLGTFAVLAA. Topologically, residues 386–391 are periplasmic; sequence FGFSIN. A helical transmembrane segment spans residues 392-413; that stretch reads TLTMFGMVLAIGLLVDDAIVVV. The Cytoplasmic segment spans residues 414-438; the sequence is ENVERVMAEEGLPPKEATRKSMGQI. Residues 439-457 form a helical membrane-spanning segment; the sequence is QGALVGIAMVLSAVFVPMA. At 458 to 465 the chain is on the periplasmic side; that stretch reads FFGGSTGA. Residues 466–490 form a helical membrane-spanning segment; it reads IYRQFSITIVSAMALSVLVALILTP. The Cytoplasmic segment spans residues 491–538; that stretch reads ALCATMLKPIAKGDHGEGKKGFFGWFNRMFEKSTHHYTDSVGGILRST. A helical membrane pass occupies residues 539 to 555; it reads GRYLVLYLIIVVGMAYL. Residues 556 to 871 are Periplasmic-facing; that stretch reads FVRLPSSFLP…MSYQERLSGN (316 aa). A helical membrane pass occupies residues 872-888; sequence QAPSLYAISLIVVFLCL. Residues 889 to 898 lie on the Cytoplasmic side of the membrane; that stretch reads AALYESWSIP. The helical transmembrane segment at 899 to 918 threads the bilayer; it reads FSVMLVVPLGVIGALLAATF. The Periplasmic segment spans residues 919–924; sequence RGLTND. The helical transmembrane segment at 925 to 943 threads the bilayer; sequence VYFQVGLLTTIGLSAKNAI. Residues 944–972 are Cytoplasmic-facing; sequence LIVEFAKDLMDKEGKGLIEATLDAVRMRL. The chain crosses the membrane as a helical span at residues 973–992; the sequence is RPILMTSLAFILGVMPLVIS. Topologically, residues 993–998 are periplasmic; sequence TGAGSG. A helical transmembrane segment spans residues 999 to 1018; that stretch reads AQNAVGTGVMGGMVTATVLA. Residues 1019-1049 lie on the Cytoplasmic side of the membrane; sequence IFFVPVFFVVVRRRFSRKNEDIEHSHTVDHH.

This sequence belongs to the resistance-nodulation-cell division (RND) (TC 2.A.6) family. As to quaternary structure, homotrimer, with large domains that extend into the periplasm, interacts with AcrA and TolC. AcrA may be required to stably link this protein and TolC. Interacts with AcrZ. Part of the AcrA-AcrB-AcrZ-TolC efflux pump.

It localises to the cell inner membrane. Its function is as follows. AcrA-AcrB-AcrZ-TolC is a drug efflux protein complex with broad substrate specificity that uses the proton motive force to export substrates. Functionally, (Microbial infection) Involved in contact-dependent growth inhibition (CDI), acts downstream of BamA, the receptor for CDI. Its role in CDI is independent of the AcrA-AcrB-TolC efflux pump complex. This Escherichia coli (strain K12) protein is Multidrug efflux pump subunit AcrB (acrB).